A 148-amino-acid chain; its full sequence is Large ribosomal subunit protein bL9 (148 aa).

This sequence belongs to the bacterial ribosomal protein bL9 family.

Binds to the 23S rRNA. In Aliarcobacter butzleri (strain RM4018) (Arcobacter butzleri), this protein is Large ribosomal subunit protein bL9.